The sequence spans 289 residues: Digeranylgeranylglyceryl phosphate synthase (289 aa).

8 consecutive transmembrane segments (helical) span residues 18–38 (LMAGFAAAIGTLIAFNILISG), 47–67 (AFPFLDAGLVFLVVFLVSGAG), 99–119 (FYFSYLLFALGTLIAFSINSI), 120–140 (CGSIALFNSLLLILYAKTLKG), 163–183 (IFGFGGIKALSVLFLLAALAI), 218–238 (LAVLTGLLAVILSPLPYFMSV), 243–263 (YIYLVSLADLGFLAAIIQLLV), and 269–289 (KSSKLFKIAMFFALIAFIAGV).

This sequence belongs to the UbiA prenyltransferase family. DGGGP synthase subfamily. The cofactor is Mg(2+).

Its subcellular location is the cell membrane. It carries out the reaction sn-3-O-(geranylgeranyl)glycerol 1-phosphate + (2E,6E,10E)-geranylgeranyl diphosphate = 2,3-bis-O-(geranylgeranyl)-sn-glycerol 1-phosphate + diphosphate. Its pathway is membrane lipid metabolism; glycerophospholipid metabolism. In terms of biological role, prenyltransferase that catalyzes the transfer of the geranylgeranyl moiety of geranylgeranyl diphosphate (GGPP) to the C2 hydroxyl of (S)-3-O-geranylgeranylglyceryl phosphate (GGGP). This reaction is the second ether-bond-formation step in the biosynthesis of archaeal membrane lipids. This Methanosarcina mazei (strain ATCC BAA-159 / DSM 3647 / Goe1 / Go1 / JCM 11833 / OCM 88) (Methanosarcina frisia) protein is Digeranylgeranylglyceryl phosphate synthase.